The chain runs to 1277 residues: Neural cell adhesion molecule L1 (1277 aa).

A signal peptide spans 1 to 34 (MAHTQRQQGGSRGQWSRCLLLLLLLPLAAQPGRA). The Extracellular portion of the chain corresponds to 35-1135 (AIQIPSSYYI…VQPSFATQGW (1101 aa)). Ig-like C2-type domains follow at residues 51–140 (PAIT…TAVS), 150–241 (PPVQ…EPIT), 256–344 (PQMM…YTVT), 349–437 (PYWT…TNVY), and 443–528 (PQIL…AEVE). Intrachain disulfides connect Cys-72-Cys-129, Cys-173-Cys-224, Cys-280-Cys-328, Cys-370-Cys-421, and Cys-465-Cys-514. N-linked (GlcNAc...) asparagine glycosylation occurs at Asn-317. N-linked (GlcNAc...) asparagine glycosylation is found at Asn-503, Asn-520, and Asn-531. In terms of domain architecture, Ig-like C2-type 6 spans 532-623 (RTVILSPPQA…DMVEASSTLT (92 aa)). Cys-554 and Cys-607 form a disulfide bridge. Fibronectin type-III domains are found at residues 630–725 (PPVH…TPAD), 730–824 (NPED…SGED), 829–931 (APLN…TPEG), 935–1030 (PPMS…TLEG), and 1032–1129 (PPAN…VQPS). The segment at 714–740 (SKLSDLYKTPADAPDSNPEDVRSESTD) is disordered. N-linked (GlcNAc...) asparagine glycosylation is found at Asn-794 and Asn-839. N-linked (GlcNAc...) asparagine glycans are attached at residues Asn-1035, Asn-1046, Asn-1068, Asn-1083, and Asn-1108. Residues 1136–1156 (FIGVVSAVVLLLLVLLILCFI) form a helical membrane-spanning segment. At 1157–1277 (KRSKGGKYSV…ATNGAPSFLN (121 aa)) the chain is on the cytoplasmic side. Disordered stretches follow at residues 1163-1216 (KYSV…LCSE) and 1232-1277 (NMDE…SFLN). Over residues 1165–1201 (SVKDKEDGPMDSEARPMKDETFGEYRSLESDLEEKRT) the composition is skewed to basic and acidic residues. A compositionally biased stretch (polar residues) spans 1232-1242 (NMDESLASQFS). Positions 1255–1277 (PDNSPLNPAANPPATNGAPSFLN) are enriched in low complexity.

Belongs to the immunoglobulin superfamily. L1/neurofascin/NgCAM family.

The protein localises to the cell membrane. It is found in the cell projection. It localises to the growth cone. In terms of biological role, neural cell adhesion molecule involved in the dynamics of cell adhesion and in the generation of transmembrane signals at tyrosine kinase receptors. During brain development, critical in multiple processes, including neuronal migration, axonal growth and fasciculation, and synaptogenesis. In the mature brain, plays a role in the dynamics of neuronal structure and function, including synaptic plasticity. The protein is Neural cell adhesion molecule L1 (l1cam) of Takifugu rubripes (Japanese pufferfish).